The following is a 359-amino-acid chain: 3-dehydroquinate synthase (359 aa).

NAD(+)-binding positions include 72-77 (EGEIHK), 106-110 (GVIGD), 130-131 (TS), Lys-143, Lys-152, and 170-173 (CLKT). 3 residues coordinate Zn(2+): Glu-185, His-248, and His-264.

The protein belongs to the sugar phosphate cyclases superfamily. Dehydroquinate synthase family. Co(2+) serves as cofactor. Zn(2+) is required as a cofactor. The cofactor is NAD(+).

It localises to the cytoplasm. The catalysed reaction is 7-phospho-2-dehydro-3-deoxy-D-arabino-heptonate = 3-dehydroquinate + phosphate. It participates in metabolic intermediate biosynthesis; chorismate biosynthesis; chorismate from D-erythrose 4-phosphate and phosphoenolpyruvate: step 2/7. Catalyzes the conversion of 3-deoxy-D-arabino-heptulosonate 7-phosphate (DAHP) to dehydroquinate (DHQ). In Dehalococcoides mccartyi (strain ATCC BAA-2266 / KCTC 15142 / 195) (Dehalococcoides ethenogenes (strain 195)), this protein is 3-dehydroquinate synthase.